The following is a 648-amino-acid chain: Chaperone protein HtpG (648 aa).

The interval Met-1 to Arg-349 is a; substrate-binding. The interval Glu-350 to Arg-570 is b. A c region spans residues Ile-571–Asp-648.

It belongs to the heat shock protein 90 family. In terms of assembly, homodimer.

It is found in the cytoplasm. In terms of biological role, molecular chaperone. Has ATPase activity. This chain is Chaperone protein HtpG, found in Aromatoleum aromaticum (strain DSM 19018 / LMG 30748 / EbN1) (Azoarcus sp. (strain EbN1)).